The sequence spans 321 residues: Ribose import permease protein RbsC (321 aa).

At 1 to 22 (MTTQTVSGRRYFTKAWLMEQKS) the chain is on the cytoplasmic side. The chain crosses the membrane as a helical span at residues 23–43 (LIALLVLIAIVSTLSPNFFTI). Topologically, residues 44-56 (NNLFNILQQTSVN) are periplasmic. The chain crosses the membrane as a helical span at residues 57–77 (AIMAVGMTLVILTSGIDLSVG). Residues 78 to 125 (SLLALTGAVAASIVGIEVNALVAVAAALALGAAIGAVTGVIVAKGRVQ) lie on the Cytoplasmic side of the membrane. The chain crosses the membrane as a helical span at residues 126–145 (AFIATLVMMLLLRGVTMVYT). The Periplasmic portion of the chain corresponds to 146 to 168 (NGSPVNTGFTENADLFGWFGIGR). The helical transmembrane segment at 169–190 (PLGVPTPVWIMGIVFLAAWYML) threads the bilayer. Residues 191–220 (HHTRLGRYIYALGGNEAATRLSGINVNKIK) are Cytoplasmic-facing. The chain crosses the membrane as a helical span at residues 221–240 (IIVYSLCGLLASLAGIIEVA). Topologically, residues 241 to 294 (RLSSAQPTAGTGYELDAIAAVVLGGTSLAGGKGRIVGTLIGALILGFLNNGLNL) are periplasmic. Residues 295-316 (LGVSSYYQMIVKAVVILLAVLV) traverse the membrane as a helical segment. At 317-321 (DNKKQ) the chain is on the cytoplasmic side.

This sequence belongs to the binding-protein-dependent transport system permease family. AraH/RbsC subfamily. As to quaternary structure, the complex is composed of an ATP-binding protein (RbsA), two transmembrane proteins (RbsC) and a solute-binding protein (RbsB).

It is found in the cell inner membrane. Part of the ABC transporter complex RbsABC involved in ribose import. Probably responsible for the translocation of the substrate across the membrane. This Escherichia coli O157:H7 protein is Ribose import permease protein RbsC (rbsC).